Here is a 153-residue protein sequence, read N- to C-terminus: Endoribonuclease YbeY (153 aa).

The Zn(2+) site is built by H116, H120, and H126.

It belongs to the endoribonuclease YbeY family. The cofactor is Zn(2+).

The protein resides in the cytoplasm. Single strand-specific metallo-endoribonuclease involved in late-stage 70S ribosome quality control and in maturation of the 3' terminus of the 16S rRNA. The chain is Endoribonuclease YbeY from Paraburkholderia phytofirmans (strain DSM 17436 / LMG 22146 / PsJN) (Burkholderia phytofirmans).